The sequence spans 76 residues: Acyl carrier protein (76 aa).

Residues Met-1–Gln-76 enclose the Carrier domain. Ser-36 is subject to O-(pantetheine 4'-phosphoryl)serine.

This sequence belongs to the acyl carrier protein (ACP) family. 4'-phosphopantetheine is transferred from CoA to a specific serine of apo-ACP by AcpS. This modification is essential for activity because fatty acids are bound in thioester linkage to the sulfhydryl of the prosthetic group.

It localises to the cytoplasm. It participates in lipid metabolism; fatty acid biosynthesis. Its function is as follows. Carrier of the growing fatty acid chain in fatty acid biosynthesis. This chain is Acyl carrier protein, found in Histophilus somni (strain 129Pt) (Haemophilus somnus).